Here is a 108-residue protein sequence, read N- to C-terminus: uncharacterized protein (108 aa).

A compositionally biased stretch (basic and acidic residues) spans 1-10; that stretch reads MDMLHNKCSD. Residues 1-27 form a disordered region; the sequence is MDMLHNKCSDAIKSTSNSNLSNEVDKQ. Residues 12 to 22 are compositionally biased toward polar residues; it reads IKSTSNSNLSN.

This is an uncharacterized protein from Saccharomyces cerevisiae (strain ATCC 204508 / S288c) (Baker's yeast).